The primary structure comprises 690 residues: BURP domain-containing protein 14 (690 aa).

The first 26 residues, 1-26, serve as a signal peptide directing secretion; that stretch reads MAPPRHARLVAATIAVLLCHLPRSAA. The segment at 134 to 163 is disordered; sequence GSSWSKSSSDGDGAAAAAAPAGGGGGGGGG. Positions 135 to 153 are enriched in low complexity; it reads SSWSKSSSDGDGAAAAAAP. A compositionally biased stretch (gly residues) spans 154–163; it reads AGGGGGGGGG. N-linked (GlcNAc...) asparagine glycosylation occurs at asparagine 178. The segment covering 201 to 211 has biased composition (gly residues); the sequence is SNGGGGGGGGV. A disordered region spans residues 201 to 232; the sequence is SNGGGGGGGGVDSFRRYGKGSQGRNDSFTSYE. Residues asparagine 225, asparagine 317, asparagine 379, asparagine 432, asparagine 450, and asparagine 601 are each glycosylated (N-linked (GlcNAc...) asparagine). Residues 477-689 enclose the BURP domain; sequence FFRERDLVAG…FQGDMTWTVA (213 aa).

In terms of tissue distribution, expressed in panicles.

This is BURP domain-containing protein 14 (BURP14) from Oryza sativa subsp. japonica (Rice).